Here is a 185-residue protein sequence, read N- to C-terminus: Large ribosomal subunit protein bL17 (185 aa).

Belongs to the bacterial ribosomal protein bL17 family. Part of the 50S ribosomal subunit. Contacts protein L32.

The polypeptide is Large ribosomal subunit protein bL17 (Rhodococcus erythropolis (strain PR4 / NBRC 100887)).